Here is a 66-residue protein sequence, read N- to C-terminus: Large ribosomal subunit protein bL32 (66 aa).

The protein belongs to the bacterial ribosomal protein bL32 family.

The sequence is that of Large ribosomal subunit protein bL32 from Rickettsia bellii (strain OSU 85-389).